The following is a 275-amino-acid chain: Axoneme-associated protein mst101(3) (275 aa).

A run of 12 repeats spans residues 64-79, 80-95, 96-111, 112-127, 128-143, 144-159, 160-175, 181-196, 197-212, 215-230, 231-246, and 249-264. Residues 64–264 are 12 X 16 AA tandem repeats of [KRA]-K-[KEM]-[CKA]-[AEKD]-[EA]-[ALE]-[AMK]-[FKAML]-[KQA]-[EQKA]-[KQCEM]-[ECLA]-[AEQ]-[AEQ]-[EQAKV]; the sequence is KKKCAEAAKK…AALQKKCAEA (201 aa).

In terms of tissue distribution, testis.

Its subcellular location is the cytoplasm. Its function is as follows. Possible structural role in the sperm tail. The protein is Axoneme-associated protein mst101(3) (mst101(3)) of Drosophila hydei (Fruit fly).